The sequence spans 542 residues: CTP synthase (542 aa).

The interval 1 to 265 (MTRYIFVTGG…DDIVVERFGL (265 aa)) is amidoligase domain. Serine 13 lines the CTP pocket. Position 13 (serine 13) interacts with UTP. ATP-binding positions include 14–19 (SLGKGI) and aspartate 71. Aspartate 71 and glutamate 139 together coordinate Mg(2+). CTP contacts are provided by residues 146–148 (DIE), 186–191 (KTKPTQ), and lysine 222. Residues 186-191 (KTKPTQ) and lysine 222 contribute to the UTP site. A Glutamine amidotransferase type-1 domain is found at 290–541 (TIAMVGKYME…VNAALKYSGK (252 aa)). An L-glutamine-binding site is contributed by glycine 351. The active-site Nucleophile; for glutamine hydrolysis is the cysteine 378. Residues 379-382 (LGMQ), glutamate 402, and arginine 469 each bind L-glutamine. Active-site residues include histidine 514 and glutamate 516.

It belongs to the CTP synthase family. Homotetramer.

The enzyme catalyses UTP + L-glutamine + ATP + H2O = CTP + L-glutamate + ADP + phosphate + 2 H(+). It catalyses the reaction L-glutamine + H2O = L-glutamate + NH4(+). The catalysed reaction is UTP + NH4(+) + ATP = CTP + ADP + phosphate + 2 H(+). The protein operates within pyrimidine metabolism; CTP biosynthesis via de novo pathway; CTP from UDP: step 2/2. Allosterically activated by GTP, when glutamine is the substrate; GTP has no effect on the reaction when ammonia is the substrate. The allosteric effector GTP functions by stabilizing the protein conformation that binds the tetrahedral intermediate(s) formed during glutamine hydrolysis. Inhibited by the product CTP, via allosteric rather than competitive inhibition. Functionally, catalyzes the ATP-dependent amination of UTP to CTP with either L-glutamine or ammonia as the source of nitrogen. Regulates intracellular CTP levels through interactions with the four ribonucleotide triphosphates. The polypeptide is CTP synthase (Pseudomonas aeruginosa (strain LESB58)).